The primary structure comprises 426 residues: Docking protein 3 (426 aa).

The region spanning 4 to 115 (PVKDGIIYVQ…WIEQLCQLAF (112 aa)) is the PH domain. Residues 145 to 249 (DLTEFPVLVL…ACQQQGQESP (105 aa)) enclose the IRS-type PTB domain. The disordered stretch occupies residues 243–282 (QQGQESPQPSAQGLSNQPWGAEAEDPQCSPTLGRAHSGSH). Residues 247–260 (ESPQPSAQGLSNQP) are compositionally biased toward polar residues. Position 331 is a phosphotyrosine (tyrosine 331). The disordered stretch occupies residues 357–426 (GCRQAPEGHS…RDGPGARDWS (70 aa)). Basic residues predominate over residues 402–411 (KPQRTLRAKL).

Belongs to the DOK family. Type A subfamily. Homooligomer. Interacts with GRB2 and INPP5D/SHIP. Tyrosine-phosphorylated in the presence of GRB2.

The protein resides in the cytoplasm. The protein localises to the cell membrane. DOK proteins are enzymatically inert adaptor or scaffolding proteins. They provide a docking platform for the assembly of multimolecular signaling complexes. Plays a role as negative regulator of the mobilization of calcium ions and of calcium signaling. This is Docking protein 3 (DOK3) from Gallus gallus (Chicken).